The sequence spans 398 residues: MNIHEYQAKRLLHEYGAPIANGVAVYSIEQAEKWAKKLPGPLYVVKSQIHAGGRGKGKFKELDLDSKGGVRLAKSVEEVVANVKEMLGKTLVTKQTGPEGKQVNRLYIEDGADIERELYLSLLVDRAVGRVAFVVSMEGGMDIETVAEETPEKILTLPVDPVQGVTSADCKRLCDALELHDNARKDGEKLFPILYKAFCEKDMSLLEINPLIVMKDGHLRVLDAKISFDNNALFRHPDILELRDLSEEDPKEIEASKHDLAYVALEGTIGCMVNGAGLAMATMDIIKLYGAEPANFLDVGGGASKEKVTAAFKIITADPNVKGILVNIFGGIMRCDVIAEGVVAAVREVGLKVPLVVRLEGTNIEQGKAIISDSGLNVISASDLDDAAQKIIAAVRGA.

Positions 9–254 constitute an ATP-grasp domain; sequence KRLLHEYGAP…LSEEDPKEIE (246 aa). ATP contacts are provided by residues K46, 53–55, E109, A112, and E117; that span reads GRG. N209 and D223 together coordinate Mg(2+). Substrate is bound by residues N274 and 331 to 333; that span reads GIM.

It belongs to the succinate/malate CoA ligase beta subunit family. As to quaternary structure, heterotetramer of two alpha and two beta subunits. Mg(2+) serves as cofactor.

It carries out the reaction succinate + ATP + CoA = succinyl-CoA + ADP + phosphate. It catalyses the reaction GTP + succinate + CoA = succinyl-CoA + GDP + phosphate. Its pathway is carbohydrate metabolism; tricarboxylic acid cycle; succinate from succinyl-CoA (ligase route): step 1/1. In terms of biological role, succinyl-CoA synthetase functions in the citric acid cycle (TCA), coupling the hydrolysis of succinyl-CoA to the synthesis of either ATP or GTP and thus represents the only step of substrate-level phosphorylation in the TCA. The beta subunit provides nucleotide specificity of the enzyme and binds the substrate succinate, while the binding sites for coenzyme A and phosphate are found in the alpha subunit. In Bartonella quintana (strain Toulouse) (Rochalimaea quintana), this protein is Succinate--CoA ligase [ADP-forming] subunit beta.